A 214-amino-acid polypeptide reads, in one-letter code: Threonylcarbamoyl-AMP synthase (214 aa).

Residues 9-214 (TDSTIQAATW…GDALTGQVIR (206 aa)) form the YrdC-like domain.

Belongs to the SUA5 family. TsaC subfamily.

The protein resides in the cytoplasm. It catalyses the reaction L-threonine + hydrogencarbonate + ATP = L-threonylcarbamoyladenylate + diphosphate + H2O. Required for the formation of a threonylcarbamoyl group on adenosine at position 37 (t(6)A37) in tRNAs that read codons beginning with adenine. Catalyzes the conversion of L-threonine, HCO(3)(-)/CO(2) and ATP to give threonylcarbamoyl-AMP (TC-AMP) as the acyladenylate intermediate, with the release of diphosphate. In Psychrobacter cryohalolentis (strain ATCC BAA-1226 / DSM 17306 / VKM B-2378 / K5), this protein is Threonylcarbamoyl-AMP synthase.